Consider the following 737-residue polypeptide: Lysyl oxidase homolog 2A (737 aa).

The N-terminal stretch at 1–18 is a signal peptide; sequence MAVSSALCIFSLLVLAQA. 4 SRCR domains span residues 29–130, 159–270, 294–393, and 403–512; these read LRLA…VICN, IRPI…VSCV, VRLR…VRCN, and IRLS…VSCS. Intrachain disulfides connect C55–C119, C68–C129, C99–C109, C188–C259, C201–C269, C235–C245, C319–C382, C332–C392, and C363–C373. An N-linked (GlcNAc...) asparagine glycan is attached at N256. N-linked (GlcNAc...) asparagine glycosylation is present at N423. Intrachain disulfides connect C432–C498, C445–C511, and C479–C489. Residues 516–718 are lysyl-oxidase like; it reads PDLVLNAQLV…WTYSCHIGGS (203 aa). Residues D517 and L518 each coordinate Ca(2+). 4 cysteine pairs are disulfide-bonded: C541/C592, C547/C662, C624/C640, and C630/C652. Positions 593, 595, and 597 each coordinate Cu cation. N611 carries an N-linked (GlcNAc...) asparagine glycan. The lysine tyrosylquinone (Lys-Tyr) cross-link spans 620 to 656; that stretch reads KASFCLEDTHCDEGISKRYHCANFGEQGITVGCWDTY. Residue Y656 is modified to 2',4',5'-topaquinone. E689, D691, N694, and N695 together coordinate Ca(2+). A disulfide bridge links C699 with C713.

Belongs to the lysyl oxidase family. The cofactor is Cu cation. Lysine tyrosylquinone residue serves as cofactor. The lysine tyrosylquinone cross-link (LTQ) is generated by condensation of the epsilon-amino group of a lysine with a topaquinone produced by oxidation of tyrosine.

Its subcellular location is the secreted. The protein localises to the extracellular space. The protein resides in the extracellular matrix. It localises to the basement membrane. It is found in the nucleus. Its subcellular location is the chromosome. The protein localises to the endoplasmic reticulum. The enzyme catalyses L-lysyl-[protein] + O2 + H2O = (S)-2-amino-6-oxohexanoyl-[protein] + H2O2 + NH4(+). Mediates the post-translational oxidative deamination of lysine residues on target proteins leading to the formation of deaminated lysine (allysine). Acts as a transcription corepressor and specifically mediates deamination of trimethylated 'Lys-4' of histone H3 (H3K4me3), a specific tag for epigenetic transcriptional activation. Shows no activity against histone H3 when it is trimethylated on 'Lys-9' (H3K9me3) or 'Lys-27' (H3K27me3) or when 'Lys-4' is monomethylated (H3K4me1) or dimethylated (H3K4me2). Also mediates deamination of methylated TAF10, a member of the transcription factor IID (TFIID) complex, which induces release of TAF10 from promoters, leading to inhibition of TFIID-dependent transcription. LOXL2-mediated deamination of TAF10 results in transcriptional repression of genes required for embryonic stem cell pluripotency. Involved in epithelial to mesenchymal transition (EMT) and participates in repression of E-cadherin, probably by mediating deamination of histone H3. When secreted into the extracellular matrix, promotes cross-linking of extracellular matrix proteins by mediating oxidative deamination of peptidyl lysine residues in precursors to fibrous collagen and elastin. Acts as a regulator of sprouting angiogenesis, probably via collagen IV scaffolding. Acts as a regulator of chondrocyte differentiation, probably by regulating expression of factors that control chondrocyte differentiation. Required with loxl2b for correct expression of Sox2 and for neural differentiation. The chain is Lysyl oxidase homolog 2A (loxl2a) from Danio rerio (Zebrafish).